The primary structure comprises 286 residues: Cytochrome bo(3) ubiquinol oxidase subunit 2 (286 aa).

Positions 1-24 (MQFIKYKSYILKFLLVSCIFCING) are cleaved as a signal peptide. Residue C25 is the site of N-palmitoyl cysteine attachment. C25 carries the S-diacylglycerol cysteine lipid modification. Residues 25 to 44 (CDCTILCPNGLIAQEQRFVL) lie on the Extracellular side of the membrane. Residues 45-67 (FVSFFTMLLIIIPVIFMTIFFVL) form a helical membrane-spanning segment. The Cytoplasmic portion of the chain corresponds to 68–85 (RYRESNFSKTYDPKWSHS). A helical membrane pass occupies residues 86-108 (NIIELLIWGIPIIIIVFLSIFSW). Topologically, residues 109–286 (KSVHDLDPKK…VIANVLKISL (178 aa)) are extracellular.

Belongs to the cytochrome c oxidase subunit 2 family. In terms of assembly, heterooctamer of two A chains, two B chains, two C chains and two D chains.

The protein localises to the cell membrane. Cytochrome bo(3) ubiquinol terminal oxidase is the component of the aerobic respiratory chain of E.coli that predominates when cells are grown at high aeration. Has proton pump activity across the membrane in addition to electron transfer, pumping 2 protons/electron. The polypeptide is Cytochrome bo(3) ubiquinol oxidase subunit 2 (cyoA) (Buchnera aphidicola subsp. Baizongia pistaciae (strain Bp)).